Reading from the N-terminus, the 532-residue chain is Bifunctional purine biosynthesis protein PurH (532 aa).

Residues 1–149 (MTDPAPLTRA…KNHGAVTVLT (149 aa)) enclose the MGS-like domain.

It belongs to the PurH family.

It catalyses the reaction (6R)-10-formyltetrahydrofolate + 5-amino-1-(5-phospho-beta-D-ribosyl)imidazole-4-carboxamide = 5-formamido-1-(5-phospho-D-ribosyl)imidazole-4-carboxamide + (6S)-5,6,7,8-tetrahydrofolate. The enzyme catalyses IMP + H2O = 5-formamido-1-(5-phospho-D-ribosyl)imidazole-4-carboxamide. Its pathway is purine metabolism; IMP biosynthesis via de novo pathway; 5-formamido-1-(5-phospho-D-ribosyl)imidazole-4-carboxamide from 5-amino-1-(5-phospho-D-ribosyl)imidazole-4-carboxamide (10-formyl THF route): step 1/1. The protein operates within purine metabolism; IMP biosynthesis via de novo pathway; IMP from 5-formamido-1-(5-phospho-D-ribosyl)imidazole-4-carboxamide: step 1/1. This Jannaschia sp. (strain CCS1) protein is Bifunctional purine biosynthesis protein PurH.